The chain runs to 168 residues: Protein-export protein SecB (168 aa).

It belongs to the SecB family. In terms of assembly, homotetramer, a dimer of dimers. One homotetramer interacts with 1 SecA dimer.

The protein localises to the cytoplasm. Its function is as follows. One of the proteins required for the normal export of preproteins out of the cell cytoplasm. It is a molecular chaperone that binds to a subset of precursor proteins, maintaining them in a translocation-competent state. It also specifically binds to its receptor SecA. The chain is Protein-export protein SecB from Saccharophagus degradans (strain 2-40 / ATCC 43961 / DSM 17024).